The sequence spans 405 residues: CLIP domain-containing serine protease B8 (405 aa).

An N-terminal signal peptide occupies residues 1–24 (MSSAVLLLLVCGCALAVLSPVAYG). 3 disulfides stabilise this stretch: cysteine 41/cysteine 94, cysteine 52/cysteine 84, and cysteine 58/cysteine 95. In terms of domain architecture, Clip spans 41-95 (CDIPNEPNPGQCMLPAECVAYGKINDVSSLSSIERFSFIKQIQCNGSDTVPYVCC). N-linked (GlcNAc...) asparagine glycosylation is found at asparagine 85 and asparagine 108. The Peptidase S1 domain maps to 137–404 (IRGGQLAEID…YLPWIKMYTG (268 aa)). A disulfide bridge connects residues cysteine 167 and cysteine 183. Residues histidine 182 and aspartate 249 each act as charge relay system in the active site. 2 disulfide bridges follow: cysteine 322–cysteine 339 and cysteine 349–cysteine 380. The Charge relay system role is filled by serine 353.

The protein belongs to the peptidase S1 family. CLIP subfamily. Proteolytic cleavage is necessary for activation. Cleaved and activated by CLIPB4.

Its subcellular location is the secreted. Its function is as follows. Serine protease that functions in the melanization-mediated immune response. Preferentially, cleaves substrates with an arginine at the P1 site. May be involved in the activation of the prophenoloxidase cascade upstream of CLIPB9; does not cleave prophenoloxidase. The protein is CLIP domain-containing serine protease B8 of Anopheles gambiae (African malaria mosquito).